Reading from the N-terminus, the 306-residue chain is Recombination-associated protein RdgC (306 aa).

Belongs to the RdgC family.

The protein resides in the cytoplasm. Its subcellular location is the nucleoid. In terms of biological role, may be involved in recombination. The polypeptide is Recombination-associated protein RdgC (Pseudomonas putida (strain GB-1)).